Reading from the N-terminus, the 442-residue chain is tRNA modification GTPase MnmE (442 aa).

The (6S)-5-formyl-5,6,7,8-tetrahydrofolate site is built by R27, E84, and K124. Residues 221 to 366 (GLHVVIVGAP…LLDALQAFAE (146 aa)) form the TrmE-type G domain. Residues 231-236 (NAGKSS), 250-256 (SKEAGTT), and 275-278 (DTAG) each bind GTP. Positions 235 and 256 each coordinate Mg(2+). Residue K442 coordinates (6S)-5-formyl-5,6,7,8-tetrahydrofolate.

This sequence belongs to the TRAFAC class TrmE-Era-EngA-EngB-Septin-like GTPase superfamily. TrmE GTPase family. As to quaternary structure, homodimer. Heterotetramer of two MnmE and two MnmG subunits. Requires K(+) as cofactor.

It localises to the cytoplasm. Its function is as follows. Exhibits a very high intrinsic GTPase hydrolysis rate. Involved in the addition of a carboxymethylaminomethyl (cmnm) group at the wobble position (U34) of certain tRNAs, forming tRNA-cmnm(5)s(2)U34. This is tRNA modification GTPase MnmE from Brucella suis biovar 1 (strain 1330).